The following is a 105-amino-acid chain: uncharacterized protein (105 aa).

Residues 58–105 (YRKKKPNHSRDNPRINSNLSTNYAQAKSVERSRSNSLNSGPNPLENAT) are disordered. Polar residues-rich tracts occupy residues 71 to 82 (RINSNLSTNYAQ) and 91 to 105 (SNSL…ENAT).

It is found in the mitochondrion. This is an uncharacterized protein from Arabidopsis thaliana (Mouse-ear cress).